A 347-amino-acid polypeptide reads, in one-letter code: Ribosomal RNA small subunit methyltransferase C (347 aa).

This sequence belongs to the methyltransferase superfamily. RsmC family. In terms of assembly, monomer.

Its subcellular location is the cytoplasm. It carries out the reaction guanosine(1207) in 16S rRNA + S-adenosyl-L-methionine = N(2)-methylguanosine(1207) in 16S rRNA + S-adenosyl-L-homocysteine + H(+). In terms of biological role, specifically methylates the guanine in position 1207 of 16S rRNA in the 30S particle. The sequence is that of Ribosomal RNA small subunit methyltransferase C from Yersinia enterocolitica serotype O:8 / biotype 1B (strain NCTC 13174 / 8081).